Reading from the N-terminus, the 96-residue chain is Co-chaperonin GroES (96 aa).

This sequence belongs to the GroES chaperonin family. As to quaternary structure, heptamer of 7 subunits arranged in a ring. Interacts with the chaperonin GroEL.

The protein localises to the cytoplasm. Functionally, together with the chaperonin GroEL, plays an essential role in assisting protein folding. The GroEL-GroES system forms a nano-cage that allows encapsulation of the non-native substrate proteins and provides a physical environment optimized to promote and accelerate protein folding. GroES binds to the apical surface of the GroEL ring, thereby capping the opening of the GroEL channel. This Leptothrix cholodnii (strain ATCC 51168 / LMG 8142 / SP-6) (Leptothrix discophora (strain SP-6)) protein is Co-chaperonin GroES.